Here is a 1162-residue protein sequence, read N- to C-terminus: PAN2-PAN3 deadenylation complex catalytic subunit PAN2 (1162 aa).

WD repeat units follow at residues 27–66 (AKEKSATKMAFDQDVNLIWVGDTYGRVSSYDPSYSLYTRH), 153–193 (NTVQ…VVKT), 196–233 (GHSCMVSSMDFRDHTLVTAGKSKRFNMMYPDQFVNVYD), and 300–339 (HPCQSVTQLQLSPSGDYIAFIEHDNNINMWSRSNGMTGFT). A linker region spans residues 341-491 (TATTILEYPD…LMNYKPSNDR (151 aa)). Residues 401 to 443 (VPLPPKSSAASSSHTALSTSSDSRPNTARSGNPSSGGQKYRLL) form a disordered region. A compositionally biased stretch (low complexity) spans 407–423 (SSAASSSHTALSTSSDS). Over residues 424–437 (RPNTARSGNPSSGG) the composition is skewed to polar residues. Residues 492 to 904 (EVPPAFTKLQ…TPEIAIYSDA (413 aa)) enclose the USP domain. One can recognise an Exonuclease domain in the interval 956-1126 (VALDAEFVAL…IEDAYTALVL (171 aa)). Residues aspartate 959, glutamate 961, aspartate 1068, and aspartate 1119 each contribute to the a divalent metal cation site.

This sequence belongs to the peptidase C19 family. PAN2 subfamily. Forms a heterotrimer with an asymmetric homodimer of the regulatory subunit PAN3 to form the poly(A)-nuclease (PAN) deadenylation complex. A divalent metal cation serves as cofactor.

The protein resides in the cytoplasm. The catalysed reaction is Exonucleolytic cleavage of poly(A) to 5'-AMP.. Its activity is regulated as follows. Positively regulated by the regulatory subunit PAN3. Functionally, catalytic subunit of the poly(A)-nuclease (PAN) deadenylation complex, one of two cytoplasmic mRNA deadenylases involved in mRNA turnover. PAN specifically shortens poly(A) tails of RNA and the activity is stimulated by poly(A)-binding protein PAB1. PAN deadenylation is followed by rapid degradation of the shortened mRNA tails by the CCR4-NOT complex. Deadenylated mRNAs are then degraded by two alternative mechanisms, namely exosome-mediated 3'-5' exonucleolytic degradation, or deadenylation-dependent mRNA decaping and subsequent 5'-3' exonucleolytic degradation by XRN1. May also be involved in post-transcriptional maturation of mRNA poly(A) tails. This is PAN2-PAN3 deadenylation complex catalytic subunit PAN2 from Eremothecium gossypii (strain ATCC 10895 / CBS 109.51 / FGSC 9923 / NRRL Y-1056) (Yeast).